A 273-amino-acid chain; its full sequence is Tyrosinase (273 aa).

Cu cation contacts are provided by histidine 37, histidine 53, histidine 62, histidine 189, histidine 193, and histidine 215.

This sequence belongs to the tyrosinase family. Cu(2+) serves as cofactor.

It carries out the reaction 2 L-dopa + O2 = 2 L-dopaquinone + 2 H2O. The catalysed reaction is L-tyrosine + O2 = L-dopaquinone + H2O. In terms of biological role, this is a copper-containing oxidase that functions in the formation of pigments such as melanins and other polyphenolic compounds. The polypeptide is Tyrosinase (melC2) (Streptomyces lincolnensis).